Here is a 435-residue protein sequence, read N- to C-terminus: Transmembrane protein 130 (435 aa).

The N-terminal stretch at 1-24 is a signal peptide; that stretch reads MAQAVWSRLGRILWLACLLPWAPA. Over 25 to 339 the chain is Extracellular; it reads GVAAGLYELN…IQVWPSRIQP (315 aa). N-linked (GlcNAc...) asparagine glycosylation is found at Asn-34, Asn-197, and Asn-300. Positions 147-233 constitute a PKD domain; the sequence is WPSSYLTKTV…AVKQKTGDFS (87 aa). The chain crosses the membrane as a helical span at residues 340-360; the sequence is AVFAFPCATLITVMLAFIMYM. Residues 361 to 435 are Cytoplasmic-facing; it reads TLRNATQQKD…LYKSVKTYTV (75 aa).

Its subcellular location is the golgi apparatus membrane. The polypeptide is Transmembrane protein 130 (TMEM130) (Homo sapiens (Human)).